Consider the following 85-residue polypeptide: Makatoxin-3 (85 aa).

The N-terminal stretch at 1–19 (MNYLIVISFALLLMTGVES) is a signal peptide. Residues 21–83 (RDAYIAKKEN…VPIRIPGPCI (63 aa)) enclose the LCN-type CS-alpha/beta domain. Cystine bridges form between Cys31/Cys82, Cys35/Cys55, Cys41/Cys65, and Cys45/Cys67.

The protein belongs to the long (4 C-C) scorpion toxin superfamily. Sodium channel inhibitor family. Alpha subfamily. As to expression, expressed by the venom gland.

The protein resides in the secreted. In terms of biological role, this protein markedly relaxes the rat carbachol-precontracted anococcygeus muscle. This relaxation is inhibited by the inhibitor of nitric oxide (NO) synthase, N-nitro-L-arginine methyl ester (L-NAME), suggesting that the response induced by this protein is NO-mediated. The chain is Makatoxin-3 from Olivierus martensii (Manchurian scorpion).